The chain runs to 195 residues: Imidazoleglycerol-phosphate dehydratase (195 aa).

The protein belongs to the imidazoleglycerol-phosphate dehydratase family.

Its subcellular location is the cytoplasm. It carries out the reaction D-erythro-1-(imidazol-4-yl)glycerol 3-phosphate = 3-(imidazol-4-yl)-2-oxopropyl phosphate + H2O. The protein operates within amino-acid biosynthesis; L-histidine biosynthesis; L-histidine from 5-phospho-alpha-D-ribose 1-diphosphate: step 6/9. The polypeptide is Imidazoleglycerol-phosphate dehydratase (Beijerinckia indica subsp. indica (strain ATCC 9039 / DSM 1715 / NCIMB 8712)).